Here is a 503-residue protein sequence, read N- to C-terminus: Methylthioalkylmalate synthase 3, chloroplastic (503 aa).

The transit peptide at 1–51 (MASLLLTSSSMITTSCRSMVLRSGLPIGSSFPSLRLTRPYDKATLFVSCCS) directs the protein to the chloroplast. The Pyruvate carboxyltransferase domain maps to 85-359 (VRVLDTTLRD…YTKIDSRQIM (275 aa)).

It belongs to the alpha-IPM synthase/homocitrate synthase family. Requires Mn(2+) as cofactor. As to expression, highly expressed in roots, leaves, and siliques. Lower amounts in stems and flowers.

The protein localises to the plastid. The protein resides in the chloroplast. The catalysed reaction is an omega-(methylsulfanyl)-2-oxoalkanoate + acetyl-CoA + H2O = a 2-(omega-methylsulfanyl)alkylmalate + CoA + H(+). Its activity is regulated as follows. Not activated by ATP. Functionally, determines the side chain length of aliphatic glucosinolate structures. Accepts all the omega-methylthio-2-oxoalkanoic acids needed to form the known C3 to C8 glucosinolates. Also able to convert pyruvate to citramalate, 2-oxoisovalerate to isopropylmalate, 4-methyl-2-oxopentanoate and 5-methyl-2-oxohexanoate for Leu-derived glucosinolates, 3-methyl-2-oxopentanoate for Ile-derived glucosinolates and phenylpyruvate to phenylethylglucosinolate. The polypeptide is Methylthioalkylmalate synthase 3, chloroplastic (MAM3) (Arabidopsis thaliana (Mouse-ear cress)).